Consider the following 420-residue polypeptide: MTVSEKIFSKASGTPVKAGDFVLANIDLAMTHDITGPLAVQGFYEIMRDEEDKKVWDPSKIVIIFDHQVPADSINAAQNHIMLRKFAKEQGILNYDVYEGVCHQVLPEKGHVKPGDLIVGSDSHTCAYGSLGAFSTGIGSTDMAAVFATGKLWFRVPETFRFEVEGKLPERVYSKDLILHLIGDVGVEGVRYMAAEYAGSTIRSLSIPERMTMSNMAIEMGGKAGIIEADEVTEAYLKERIPGFKLDPYWKSDEGAKYLDIRYYDVSDLEPQVACPHNVDNVKPVSEVEGTKLDQIFMGSCTNGRFEDIKIMADIMGDEPVAKNLRLLVVPASKTEYMKLLKAGYIEKLVNAGAIVEAPCCGPCMGGSFGLLGPGEVGLATSNRNFKGREGSAESFVYLSSPATAGASALTGEITDPRKV.

Residues cysteine 301, cysteine 361, and cysteine 364 each coordinate [4Fe-4S] cluster.

This sequence belongs to the aconitase/IPM isomerase family. LeuC type 2 subfamily. Heterodimer of LeuC and LeuD. Requires [4Fe-4S] cluster as cofactor.

The catalysed reaction is (2R,3S)-3-isopropylmalate = (2S)-2-isopropylmalate. Its pathway is amino-acid biosynthesis; L-leucine biosynthesis; L-leucine from 3-methyl-2-oxobutanoate: step 2/4. In terms of biological role, catalyzes the isomerization between 2-isopropylmalate and 3-isopropylmalate, via the formation of 2-isopropylmaleate. The protein is Probable 3-isopropylmalate dehydratase large subunit of Methanosarcina mazei (strain ATCC BAA-159 / DSM 3647 / Goe1 / Go1 / JCM 11833 / OCM 88) (Methanosarcina frisia).